Consider the following 264-residue polypeptide: MKSKLKLHGFNNLTKTLSFNIYDICYAETPEDLQAYVQYIDEEYDAERLTQILTDVVDIIGANILNIARQDYDPQGASVTILISEQPVTPTDSQIEESPGPLPDTILAHLDKSHITVHTYPEIHPVDGIATFRVDIDVSTCGVISPLKALNYLIHQFDSDIVTVDYRVRGFTRDIEGRKHFIDHEINSIQNYLSDDTREAYQMTDVNVYQENLFHTKMLLKDFELENYLFGDATRTLSTEQREQVTERLKHEMLEIFYARNMPR.

S113 (schiff-base intermediate with substrate; via pyruvic acid) is an active-site residue. At S113 the chain carries Pyruvic acid (Ser); by autocatalysis. Catalysis depends on H118, which acts as the Proton acceptor; for processing activity. The active-site Proton donor; for catalytic activity is C141.

Belongs to the prokaryotic AdoMetDC family. Type 2 subfamily. As to quaternary structure, heterooctamer of four alpha and four beta chains arranged as a tetramer of alpha/beta heterodimers. Pyruvate serves as cofactor. Post-translationally, is synthesized initially as an inactive proenzyme. Formation of the active enzyme involves a self-maturation process in which the active site pyruvoyl group is generated from an internal serine residue via an autocatalytic post-translational modification. Two non-identical subunits are generated from the proenzyme in this reaction, and the pyruvate is formed at the N-terminus of the alpha chain, which is derived from the carboxyl end of the proenzyme. The post-translation cleavage follows an unusual pathway, termed non-hydrolytic serinolysis, in which the side chain hydroxyl group of the serine supplies its oxygen atom to form the C-terminus of the beta chain, while the remainder of the serine residue undergoes an oxidative deamination to produce ammonia and the pyruvoyl group blocking the N-terminus of the alpha chain.

The catalysed reaction is S-adenosyl-L-methionine + H(+) = S-adenosyl 3-(methylsulfanyl)propylamine + CO2. Its pathway is amine and polyamine biosynthesis; S-adenosylmethioninamine biosynthesis; S-adenosylmethioninamine from S-adenosyl-L-methionine: step 1/1. Functionally, catalyzes the decarboxylation of S-adenosylmethionine to S-adenosylmethioninamine (dcAdoMet), the propylamine donor required for the synthesis of the polyamines spermine and spermidine from the diamine putrescine. In Pseudomonas aeruginosa (strain UCBPP-PA14), this protein is S-adenosylmethionine decarboxylase proenzyme.